Here is a 98-residue protein sequence, read N- to C-terminus: NADH-ubiquinone oxidoreductase chain 4L (98 aa).

3 helical membrane passes run 1–21, 26–46, and 61–81; these read MPLI…GVLI, LMSS…LVSL, and LILL…LVMV.

The protein belongs to the complex I subunit 4L family. As to quaternary structure, core subunit of respiratory chain NADH dehydrogenase (Complex I) which is composed of 45 different subunits.

Its subcellular location is the mitochondrion inner membrane. It carries out the reaction a ubiquinone + NADH + 5 H(+)(in) = a ubiquinol + NAD(+) + 4 H(+)(out). Core subunit of the mitochondrial membrane respiratory chain NADH dehydrogenase (Complex I) which catalyzes electron transfer from NADH through the respiratory chain, using ubiquinone as an electron acceptor. Part of the enzyme membrane arm which is embedded in the lipid bilayer and involved in proton translocation. The protein is NADH-ubiquinone oxidoreductase chain 4L (MT-ND4L) of Nycticebus coucang (Slow loris).